A 306-amino-acid polypeptide reads, in one-letter code: Recombination-associated protein RdgC (306 aa).

It belongs to the RdgC family.

The protein localises to the cytoplasm. Its subcellular location is the nucleoid. May be involved in recombination. The protein is Recombination-associated protein RdgC of Burkholderia ambifaria (strain MC40-6).